The primary structure comprises 293 residues: 4-hydroxy-tetrahydrodipicolinate synthase (293 aa).

Residue T44 coordinates pyruvate. The active-site Proton donor/acceptor is Y132. Residue K161 is the Schiff-base intermediate with substrate of the active site. I203 serves as a coordination point for pyruvate.

Belongs to the DapA family. In terms of assembly, homotetramer; dimer of dimers.

The protein localises to the cytoplasm. The catalysed reaction is L-aspartate 4-semialdehyde + pyruvate = (2S,4S)-4-hydroxy-2,3,4,5-tetrahydrodipicolinate + H2O + H(+). It functions in the pathway amino-acid biosynthesis; L-lysine biosynthesis via DAP pathway; (S)-tetrahydrodipicolinate from L-aspartate: step 3/4. Functionally, catalyzes the condensation of (S)-aspartate-beta-semialdehyde [(S)-ASA] and pyruvate to 4-hydroxy-tetrahydrodipicolinate (HTPA). The polypeptide is 4-hydroxy-tetrahydrodipicolinate synthase (Sulfurihydrogenibium sp. (strain YO3AOP1)).